A 643-amino-acid chain; its full sequence is 1-deoxy-D-xylulose-5-phosphate synthase (643 aa).

Thiamine diphosphate is bound by residues His-78 and 119–121 (AHS). Residue Asp-150 participates in Mg(2+) binding. Thiamine diphosphate is bound by residues 151–152 (GA), Asn-179, Tyr-288, and Glu-370. Position 179 (Asn-179) interacts with Mg(2+).

Belongs to the transketolase family. DXPS subfamily. In terms of assembly, homodimer. It depends on Mg(2+) as a cofactor. Thiamine diphosphate is required as a cofactor.

The catalysed reaction is D-glyceraldehyde 3-phosphate + pyruvate + H(+) = 1-deoxy-D-xylulose 5-phosphate + CO2. The protein operates within metabolic intermediate biosynthesis; 1-deoxy-D-xylulose 5-phosphate biosynthesis; 1-deoxy-D-xylulose 5-phosphate from D-glyceraldehyde 3-phosphate and pyruvate: step 1/1. Functionally, catalyzes the acyloin condensation reaction between C atoms 2 and 3 of pyruvate and glyceraldehyde 3-phosphate to yield 1-deoxy-D-xylulose-5-phosphate (DXP). This chain is 1-deoxy-D-xylulose-5-phosphate synthase, found in Xanthobacter autotrophicus (strain ATCC BAA-1158 / Py2).